The chain runs to 497 residues: Galactose/methyl galactoside import ATP-binding protein MglA (497 aa).

ABC transporter domains are found at residues 6–241 (LEIK…VGRS) and 252–497 (VPGE…AKYL). 38–45 (GENGAGKS) contacts ATP.

The protein belongs to the ABC transporter superfamily. Galactose/methyl galactoside importer (TC 3.A.1.2.3) family. In terms of assembly, the complex is composed of one ATP-binding protein (MglA), two transmembrane proteins (MglC) and a solute-binding protein (MglB).

It is found in the cell inner membrane. It carries out the reaction D-galactose(out) + ATP + H2O = D-galactose(in) + ADP + phosphate + H(+). The enzyme catalyses methyl beta-D-galactoside(out) + ATP + H2O = methyl beta-D-galactoside(in) + ADP + phosphate + H(+). In terms of biological role, part of the ABC transporter complex MglABC involved in galactose/methyl galactoside import. Responsible for energy coupling to the transport system. This Treponema denticola (strain ATCC 35405 / DSM 14222 / CIP 103919 / JCM 8153 / KCTC 15104) protein is Galactose/methyl galactoside import ATP-binding protein MglA.